The primary structure comprises 433 residues: Acetyl-CoA acetyltransferase erg10A, mitochondrial (433 aa).

Residues 1–34 (MAIQTTTGLAARLVAKRATFPASRRNFSASRSAL) constitute a mitochondrion transit peptide. C124 serves as the catalytic Acyl-thioester intermediate. Residue Y219 coordinates K(+). CoA is bound by residues N229 and K262. Position 280 (A280) interacts with K(+). Residue S284 coordinates CoA. Catalysis depends on proton acceptor residues H387 and C415. A chloride-binding site is contributed by N416.

The protein belongs to the thiolase-like superfamily. Thiolase family. In terms of assembly, homotetramer. It depends on K(+) as a cofactor.

It localises to the mitochondrion. The enzyme catalyses 2 acetyl-CoA = acetoacetyl-CoA + CoA. It functions in the pathway metabolic intermediate biosynthesis; (R)-mevalonate biosynthesis; (R)-mevalonate from acetyl-CoA: step 1/3. Its function is as follows. Mitochondrial acetyl-CoA acetyltransferase that catalyzes both the formation and degradation of acetoacetyl-CoA. Has no overlapping function with erg10B and seems not to be involved in ergosterol biosynthesis. Plays an important role in growth, morphogenesis and maintaining mitochondrial function including the response to oxidative stresses. This is Acetyl-CoA acetyltransferase erg10A, mitochondrial from Aspergillus fumigatus (strain ATCC MYA-4609 / CBS 101355 / FGSC A1100 / Af293) (Neosartorya fumigata).